The primary structure comprises 131 residues: MSWQAYVDDHLCCEIDGQHLTSAAILGHDGSVWAESPNFPKFKPEEIAGIVKDFEEPGHLAPTGLFLGGTKYMVIQGEPGVVIRGKKGTGGITIKKTGMALILGIYDEPMTPGQCNLVVERLGDYLIDQGY.

It belongs to the profilin family. In terms of assembly, occurs in many kinds of cells as a complex with monomeric actin in a 1:1 ratio.

It is found in the cytoplasm. The protein localises to the cytoskeleton. Functionally, binds to actin and affects the structure of the cytoskeleton. At high concentrations, profilin prevents the polymerization of actin, whereas it enhances it at low concentrations. By binding to PIP2, it inhibits the formation of IP3 and DG. This Triticum aestivum (Wheat) protein is Profilin-2 (PRO2).